The following is a 186-amino-acid chain: Elongation factor P (186 aa).

The N-alpha-linked (Rha) arginine glycan is linked to R32.

Belongs to the elongation factor P family. Post-translationally, glycosylated ar Arg-32 by EarP: arginine rhamnosylation is required for EF-P function and rescue of polyproline stalled ribosomes.

It is found in the cytoplasm. Its pathway is protein biosynthesis; polypeptide chain elongation. Involved in peptide bond synthesis. Stimulates efficient translation and peptide-bond synthesis on native or reconstituted 70S ribosomes in vitro. Probably functions indirectly by altering the affinity of the ribosome for aminoacyl-tRNA, thus increasing their reactivity as acceptors for peptidyl transferase. The sequence is that of Elongation factor P from Shewanella oneidensis (strain ATCC 700550 / JCM 31522 / CIP 106686 / LMG 19005 / NCIMB 14063 / MR-1).